The following is a 441-amino-acid chain: CBL-interacting serine/threonine-protein kinase 3 (441 aa).

Residues 14-269 (YEVGRTIGEG…PQEVFEDEWF (256 aa)) enclose the Protein kinase domain. ATP contacts are provided by residues 20 to 28 (IGEGTFAKV) and Lys-43. The active-site Proton acceptor is the Asp-137. Residues 155 to 184 (DFGLSALSQQVRDDGLLHTSCGTPNYVAPE) form an activation loop region. The 25-residue stretch at 307-331 (EQPAAINAFEIISMSRGLNLENLFD) folds into the NAF domain. Residues 337–366 (KRETRITLRGGANEIIEKIEEAAKPLGFDV) are PPI.

The protein belongs to the protein kinase superfamily. CAMK Ser/Thr protein kinase family. SNF1 subfamily. In terms of assembly, interacts with CBL3 and CBL9. The cofactor is Mn(2+). As to expression, mostly expressed in germinating seeds and young seedlings. Detected at low levels in roots, stems, leaves and flowers.

The catalysed reaction is L-seryl-[protein] + ATP = O-phospho-L-seryl-[protein] + ADP + H(+). It carries out the reaction L-threonyl-[protein] + ATP = O-phospho-L-threonyl-[protein] + ADP + H(+). Functionally, involved in the resistance to some abiotic stresses (e.g. high salt, hyperosmotic stress) in young seedlings, by regulating the expression of several stress-inducible genes (cold- and salt-induced genes but not drought-responsive genes). Required for the ABA response during germination. CIPK serine-threonine protein kinases interact with CBL proteins. Binding of a CBL protein to the regulatory NAF domain of CIPK protein lead to the activation of the kinase in a calcium-dependent manner. The CBL9/CIPK3 complex acts in the regulation of abscisic acid response in seed germination. This chain is CBL-interacting serine/threonine-protein kinase 3 (CIPK3), found in Arabidopsis thaliana (Mouse-ear cress).